Consider the following 416-residue polypeptide: Phosphatidylinositol 5-phosphate 4-kinase type-2 beta (416 aa).

Residue Ser-2 is modified to N-acetylserine. Thr-8 carries the post-translational modification Phosphothreonine. Position 19 is a phosphoserine (Ser-19). Residues 38–415 form the PIPK domain; that stretch reads ASEPILSVLM…RFNEFMSNIL (378 aa). The interval 64 to 70 is required for interaction with PIP5K1A; sequence VMLMPDD. N6-acetyllysine is present on residues Lys-94 and Lys-150. Residues 202–204 and Lys-214 contribute to the ATP site; that span reads RNV. Residues 203-204 and Lys-214 each bind GTP; that span reads NV. Position 322 is a phosphothreonine (Thr-322). Phosphoserine is present on Ser-326. Asp-369 contributes to the GTP binding site.

Homodimer. Binds TNFRSF1A. Interacts with PIP4K2A; the interaction suppresses ubiquitination by the SPOP/CUL3 complex. In terms of processing, ubiquitinated by the SPOP/CUL3 complex. Ubiquitination is stimulated by PtdIns5P levels. Post-translationally, phosphorylated on serine residues. As to expression, highly expressed in brain, heart, pancreas, skeletal muscle and kidney. Detected at lower levels in placenta, lung and liver.

The protein localises to the endoplasmic reticulum membrane. It is found in the cell membrane. Its subcellular location is the nucleus. It localises to the cytoplasm. The catalysed reaction is a 1,2-diacyl-sn-glycero-3-phospho-(1D-myo-inositol-5-phosphate) + ATP = a 1,2-diacyl-sn-glycero-3-phospho-(1D-myo-inositol-4,5-bisphosphate) + ADP + H(+). It carries out the reaction 1,2-dihexadecanoyl-sn-glycero-3-phospho-(1D-myo-inositol-5-phosphate) + ATP = 1,2-dihexadecanoyl-sn-glycero-3-phospho-(1D-myo-inositol-4,5-bisphosphate) + ADP + H(+). It catalyses the reaction 1,2-dihexadecanoyl-sn-glycero-3-phospho-(1D-myo-inositol-5-phosphate) + GTP = 1,2-dihexadecanoyl-sn-glycero-3-phospho-(1D-myo-inositol-4,5-bisphosphate) + GDP + H(+). Functionally, participates in the biosynthesis of phosphatidylinositol 4,5-bisphosphate. Preferentially utilizes GTP, rather than ATP, for PI(5)P phosphorylation and its activity reflects changes in direct proportion to the physiological GTP concentration. Its GTP-sensing activity is critical for metabolic adaptation. PIP4Ks negatively regulate insulin signaling through a catalytic-independent mechanism. They interact with PIP5Ks and suppress PIP5K-mediated PtdIns(4,5)P2 synthesis and insulin-dependent conversion to PtdIns(3,4,5)P3. This chain is Phosphatidylinositol 5-phosphate 4-kinase type-2 beta, found in Homo sapiens (Human).